Consider the following 862-residue polypeptide: MNIQEQGFPLDLGASFTEDAPRPPVPGEEGELVSTDPRPASYSFCSGKGVGIKGETSTATPRRSDLDLGYEPEGSASPTPPYLKWAESLHSLLDDQDGISLFRTFLKQEGCADLLDFWFACTGFRKLEPCDSNEEKRLKLARAIYRKYILDNNGIVSRQTKPATKSFIKGCIMKQLIDPAMFDQAQTEIQATMEENTYPSFLKSDIYLEYTRTGSESPKVCSDQSSGSGTGKGISGYLPTLNEDEEWKCDQDMDEDDGRDAAPPGRLPQKLLLETAAPRVSSSRRYSEGREFRYGSWREPVNPYYVNAGYALAPATSANDSEQQSLSSDADTLSLTDSSVDGIPPYRIRKQHRREMQESVQVNGRVPLPHIPRTYRVPKEVRVEPQKFAEELIHRLEAVQRTREAEEKLEERLKRVRMEEEGEDGDPSSGPPGPCHKLPPAPAWHHFPPRCVDMGCAGLRDAHEENPESILDEHVQRVLRTPGRQSPGPGHRSPDSGHVAKMPVALGGAASGHGKHVPKSGAKLDAAGLHHHRHVHHHVHHSTARPKEQVEAEATRRAQSSFAWGLEPHSHGARSRGYSESVGAAPNASDGLAHSGKVGVACKRNAKKAESGKSASTEVPGASEDAEKNQKIMQWIIEGEKEISRHRRTGHGSSGTRKPQPHENSRPLSLEHPWAGPQLRTSVQPSHLFIQDPTMPPHPAPNPLTQLEEARRRLEEEEKRASRAPSKQRYVQEVMRRGRACVRPACAPVLHVVPAVSDMELSETETRSQRKVGGGSAQPCDSIVVAYYFCGEPIPYRTLVRGRAVTLGQFKELLTKKGSYRYYFKKVSDEFDCGVVFEEVREDEAVLPVFEEKIIGKVEKVD.

The disordered stretch occupies residues M1 to P78. The Tankyrase-binding motif motif lies at A20–E29. Phosphoserine; by CK1 occurs at positions 75 and 77. The RGS domain occupies S88 to T211. The segment at E209 to S338 is interaction with TP53. 2 disordered regions span residues S215–G289 and T316–P344. S217 carries the post-translational modification Phosphoserine; by CK1. Residues N242–G258 show a composition bias toward acidic residues. Residues S325–S339 show a composition bias toward low complexity. The tract at residues I348–G433 is interaction with GSK3B. The interaction with SIAH1 and SIAH2 stretch occupies residues R353–E411. The tract at residues L413–A441 is disordered. The span at S429–A441 shows a compositional bias: pro residues. Residues P434 to M502 form an interaction with CTNNB1 region. S469 is subject to Phosphoserine; by CK1. Positions R480–A500 are disordered. Phosphothreonine; by GSK3-beta is present on T481. A phosphoserine mark is found at S486, S493, and S511. The tract at residues G507–S757 is interaction with RNF111. Over residues H531–A544 the composition is skewed to basic residues. Disordered regions lie at residues H531 to N629 and K641 to L679. A compositionally biased stretch (basic and acidic residues) spans R545–R556. Residues S575 to F789 form an interaction with PPP2CA region. S581 bears the Phosphoserine mark. Residues P677–V752 are interaction with HIPK2. The region spanning C780 to D862 is the DIX domain. Residues K857 and K860 each participate in a glycyl lysine isopeptide (Lys-Gly) (interchain with G-Cter in SUMO) cross-link.

Homodimer. Interacts with ZBED3; the interaction is direct, enhanced by protein kinase GSK3B and casein kinase CSNK1E activities and decreases GSK3B-induced beta-catenin serine and threonine phosphorylations. Component of the beta-catenin destruction complex, containing at least, CTNNB1, an axin and GSK3B, that regulates CTNNB1 protein levels through phosphorylation and ubiquitination. Interacts with CTNNB1 (via the armadillo repeats 2-7). Interacts with GSK3B; the interaction hyperphosphorylates CTNNB1 leading to its ubiquitination and destruction. Component of the AXIN1-HIPK2-TP53 complex. Interacts directly in the complex with TP53 and HIPK2. Interacts with DAXX; the interaction stimulates the interaction of DAXX with TP53, stimulates 'Ser-46' phosphorylation of TP53 and induces cell death on UV irradiation. Also binds APC, SMAD6, SMAD7 and RNF111. Interacts with DIXDC1; prevents interaction with MAP3K1. Interacts with MAP3K4. Interacts with ANKRD6 and AIDA. Interacts with MDFI; the interaction decreases AXIN1-mediated JUN N-terminal kinase (JNK) activation. Interacts with MDFIC; the interaction inhibits beta-cateninin-mediated signaling and AXIN1-mediated JUN N-terminal kinase (JNK) activation. Interacts with LRP5 (via its phosphorylated PPPSP motifs); the interaction is stimulated by WNT1 and GSK3B and activates beta-catenin signaling. Interacts (via the C-terminal) with PPP1CA; the interaction dephosphorylates AXIN1 and regulates interaction with GSK3B. Interacts with PPP2CA; the interaction dephosphorylates AXIN1. Interacts with MACF1. Found in a complex composed of MACF1, APC, AXIN1, CTNNB1 and GSK3B. Interacts with TNKS. Interacts with DAB2; the interaction is mutually exclusive with the AXIN1:PPP1CA interaction. Interacts with WDR26. Interacts with GID8. Interacts with SIAH1 and SIAH2; both probably catalyze AXIN1 ubiquitination and subsequent proteasome-mediated ubiquitin-dependent degradation. Interaction with GSK3B and AXIN1 is competitive. Phosphorylation and dephosphorylation of AXIN1 regulates assembly and function of the beta-catenin complex. Phosphorylated by CK1 and GSK3B. Dephosphorylated by PPP1CA and PPP2CA. Phosphorylation by CK1 enhances binding of GSK3B to AXIN1. Post-translationally, ADP-ribosylated by tankyrase TNKS and TNKS2. Poly-ADP-ribosylated protein is recognized by RNF146, followed by ubiquitination at 'Lys-48' and subsequent activation of the Wnt signaling pathway. In terms of processing, ubiquitinated by RNF146 when poly-ADP-ribosylated, leading to its degradation and subsequent activation of the Wnt signaling pathway. Sumoylation at Lys-857 and Lys-860 prevents ubiquitination and degradation. Sumoylation is required for AXIN1-mediated JNK activation. Deubiquitinated by USP34, deubiquitinated downstream of beta-catenin stabilization step: deubiquitination is important for nuclear accumulation during Wnt signaling to positively regulate beta-catenin (CTNBB1)-mediated transcription. Ubiquitination by SIAH1 and SIAH2 induces its proteasomal degradation as part of the activation of the Wnt signaling pathway. Ubiquitously expressed.

The protein localises to the cytoplasm. Its subcellular location is the nucleus. It localises to the membrane. It is found in the cell membrane. Component of the beta-catenin destruction complex required for regulating CTNNB1 levels through phosphorylation and ubiquitination, and modulating Wnt-signaling. Controls dorsoventral patterning via two opposing effects; down-regulates CTNNB1 to inhibit the Wnt signaling pathway and ventralize embryos, but also dorsalizes embryos by activating a Wnt-independent JNK signaling pathway. In Wnt signaling, probably facilitates the phosphorylation of CTNNB1 and APC by GSK3B. Likely to function as a tumor suppressor. Enhances TGF-beta signaling by recruiting the RNF111 E3 ubiquitin ligase and promoting the degradation of inhibitory SMAD7. Also a component of the AXIN1-HIPK2-TP53 complex which controls cell growth, apoptosis and development. Facilitates the phosphorylation of TP53 by HIPK2 upon ultraviolet irradiation. In Homo sapiens (Human), this protein is Axin-1 (AXIN1).